A 361-amino-acid chain; its full sequence is Probable purine permease 13 (361 aa).

The next 10 helical transmembrane spans lie at 35 to 55, 68 to 88, 103 to 123, 129 to 151, 156 to 176, 192 to 212, 238 to 258, 268 to 288, 289 to 309, and 323 to 343; these read WILVFISIFFLISAQAIAVLL, WISTLVQTCGFPILYLPLCFL, LVWIYLSLGFAIGLDNLLYSF, SASTYSILCSSQLAFNGVFSYYI, ITCLILFSVLFLSVSAVLVSL, LIGCLCTVFASLIYSLQLSLM, VASCVAVIGLFASGEWMLLSV, VIYVLTLVGTAVSWQLGSVGA, VALIFLVSSLFSNLIGTLSLI, and LTEVKMVAMLIAFMGFGFYIY.

This sequence belongs to the purine permeases (TC 2.A.7.14) family.

The protein localises to the membrane. This is Probable purine permease 13 (PUP13) from Arabidopsis thaliana (Mouse-ear cress).